A 627-amino-acid chain; its full sequence is Pescadillo homolog (627 aa).

Residues 321–414 (RLRTLFKGLK…QLLPTNKYFI (94 aa)) form the BRCT domain. 3 disordered regions span residues 450-469 (HAQSDDDSEDEAQEEEETVD), 488-566 (YKKY…MVKP), and 595-627 (TIEASEKEARKTAKREARKEAAAAAAKASKLGK). Phosphoserine occurs at positions 453 and 457. 2 stretches are compositionally biased toward acidic residues: residues 454-469 (DDDSEDEAQEEEETVD) and 497-521 (VNEDEEDPEDEDDNEDDDEEEEELD). Over residues 522–533 (EKTKRLQEEKQK) the composition is skewed to basic and acidic residues. Basic residues predominate over residues 540-549 (KVHKVNKRQV). 2 stretches are compositionally biased toward basic and acidic residues: residues 550-559 (HKAEVDEHRL) and 595-615 (TIEASEKEARKTAKREARKEA). Residues 582-625 (KEKEEWLLRKKRRTIEASEKEARKTAKREARKEAAAAAAKASKL) are a coiled coil. Over residues 616 to 627 (AAAAAKASKLGK) the composition is skewed to low complexity.

It belongs to the pescadillo family.

It localises to the nucleus. The protein localises to the nucleolus. Its subcellular location is the nucleoplasm. Its function is as follows. Required for maturation of ribosomal RNAs and formation of the large ribosomal subunit. The polypeptide is Pescadillo homolog (Drosophila simulans (Fruit fly)).